A 310-amino-acid polypeptide reads, in one-letter code: NADH-cytochrome b5 reductase 1 (310 aa).

A helical transmembrane segment spans residues 30-50 (WVPFAVALAAGFVAWKLSVGG). One can recognise an FAD-binding FR-type domain in the interval 61–166 (NEFQNFVLKE…RGPKGAMVYT (106 aa)). FAD is bound by residues 146–160 (TTLK…RGPK) and 172–209 (HIGM…QVDL).

The protein belongs to the flavoprotein pyridine nucleotide cytochrome reductase family. As to quaternary structure, monomer. Component of the 2-(3-amino-3-carboxypropyl)histidine synthase complex composed of dph1, dph2, dph3 and a NADH-dependent reductase, predominantly cbr1. FAD serves as cofactor.

It is found in the mitochondrion outer membrane. The enzyme catalyses 2 Fe(III)-[cytochrome b5] + NADH = 2 Fe(II)-[cytochrome b5] + NAD(+) + H(+). The catalysed reaction is 2 Fe(3+)-[Dph3] + NADH = 2 Fe(2+)-[Dph3] + NAD(+) + H(+). Its pathway is protein modification; peptidyl-diphthamide biosynthesis. Its function is as follows. NADH-dependent reductase for dph3 and cytochrome b5. Required for the first step of diphthamide biosynthesis, a post-translational modification of histidine which occurs in elongation factor 2. Dph1 and dph2 transfer a 3-amino-3-carboxypropyl (ACP) group from S-adenosyl-L-methionine (SAM) to a histidine residue, the reaction is assisted by a reduction system comprising dph3 and a NADH-dependent reductase, predominantly cbr1. By reducing dph3, also involved in the formation of the tRNA wobble base modification mcm5s 2U (5-methoxycarbonylmethyl-2-thiouridine), mediated by the elongator complex. The cytochrome b5/NADH cytochrome b5 reductase electron transfer system supports the catalytic activity of several sterol biosynthetic enzymes. The sequence is that of NADH-cytochrome b5 reductase 1 (cbr1) from Emericella nidulans (strain FGSC A4 / ATCC 38163 / CBS 112.46 / NRRL 194 / M139) (Aspergillus nidulans).